Reading from the N-terminus, the 2118-residue chain is Cilia- and flagella-associated protein 65 (2118 aa).

A helical transmembrane segment spans residues 6-26 (GSLRALLLAAAAAAAAAAGAV). The MSP domain occupies 615–736 (FLHSNPEFGP…HTPRLTTDLP (122 aa)). 3 disordered regions span residues 1007 to 1029 (APLL…LDAG), 1764 to 1909 (SGGS…DDFA), and 1924 to 1958 (AGGG…APPR). The segment covering 1825–1834 (GGAGGAPGGD) has biased composition (gly residues). Positions 1840–1849 (RPGTPSMTAA) are enriched in low complexity. Over residues 1850-1859 (AHHHHHHPRH) the composition is skewed to basic residues. Low complexity-rich tracts occupy residues 1892–1902 (SISGAPDPDSA) and 1936–1949 (PGGS…ELAP). A coiled-coil region spans residues 2016–2045 (AVRAAAEAARAEAEARAAAEAATKAAAEAE).

Belongs to the CFAP65 family.

It is found in the cell projection. The protein localises to the cilium. Its subcellular location is the flagellum membrane. It localises to the cytoplasm. Functionally, may play a role in flagellar formation and mobility. The sequence is that of Cilia- and flagella-associated protein 65 from Chlamydomonas reinhardtii (Chlamydomonas smithii).